The following is a 267-amino-acid chain: Small ribosomal subunit protein uS2 (267 aa).

Residues 247 to 267 (LEDDILEDVEDEEEGDPEQGE) form a disordered region.

Belongs to the universal ribosomal protein uS2 family.

The protein is Small ribosomal subunit protein uS2 of Synechococcus sp. (strain JA-3-3Ab) (Cyanobacteria bacterium Yellowstone A-Prime).